Here is a 118-residue protein sequence, read N- to C-terminus: Small ribosomal subunit protein uS13 (118 aa).

The interval 94-118 (NLPVRGQNTKNNARTRKGPIRSIKR) is disordered. Positions 106-118 (ARTRKGPIRSIKR) are enriched in basic residues.

Belongs to the universal ribosomal protein uS13 family. As to quaternary structure, part of the 30S ribosomal subunit. Forms a loose heterodimer with protein S19. Forms two bridges to the 50S subunit in the 70S ribosome.

Functionally, located at the top of the head of the 30S subunit, it contacts several helices of the 16S rRNA. In the 70S ribosome it contacts the 23S rRNA (bridge B1a) and protein L5 of the 50S subunit (bridge B1b), connecting the 2 subunits; these bridges are implicated in subunit movement. Contacts the tRNAs in the A and P-sites. The polypeptide is Small ribosomal subunit protein uS13 (Psychrobacter sp. (strain PRwf-1)).